The primary structure comprises 310 residues: Aspartate carbamoyltransferase catalytic subunit (310 aa).

Arg-54 and Thr-55 together coordinate carbamoyl phosphate. Residue Lys-84 participates in L-aspartate binding. The carbamoyl phosphate site is built by Arg-105, His-134, and Gln-137. L-aspartate is bound by residues Arg-167 and Arg-229. Residues Leu-267 and Pro-268 each coordinate carbamoyl phosphate.

The protein belongs to the aspartate/ornithine carbamoyltransferase superfamily. ATCase family. In terms of assembly, heterododecamer (2C3:3R2) of six catalytic PyrB chains organized as two trimers (C3), and six regulatory PyrI chains organized as three dimers (R2).

It catalyses the reaction carbamoyl phosphate + L-aspartate = N-carbamoyl-L-aspartate + phosphate + H(+). The protein operates within pyrimidine metabolism; UMP biosynthesis via de novo pathway; (S)-dihydroorotate from bicarbonate: step 2/3. In terms of biological role, catalyzes the condensation of carbamoyl phosphate and aspartate to form carbamoyl aspartate and inorganic phosphate, the committed step in the de novo pyrimidine nucleotide biosynthesis pathway. This chain is Aspartate carbamoyltransferase catalytic subunit, found in Enterobacter sp. (strain 638).